We begin with the raw amino-acid sequence, 491 residues long: Glutamyl-tRNA(Gln) amidotransferase subunit A (491 aa).

Active-site charge relay system residues include Lys79 and Ser154. Residue Ser178 is the Acyl-ester intermediate of the active site.

This sequence belongs to the amidase family. GatA subfamily. Heterotrimer of A, B and C subunits.

It catalyses the reaction L-glutamyl-tRNA(Gln) + L-glutamine + ATP + H2O = L-glutaminyl-tRNA(Gln) + L-glutamate + ADP + phosphate + H(+). Allows the formation of correctly charged Gln-tRNA(Gln) through the transamidation of misacylated Glu-tRNA(Gln) in organisms which lack glutaminyl-tRNA synthetase. The reaction takes place in the presence of glutamine and ATP through an activated gamma-phospho-Glu-tRNA(Gln). This chain is Glutamyl-tRNA(Gln) amidotransferase subunit A, found in Synechococcus sp. (strain CC9902).